A 126-amino-acid polypeptide reads, in one-letter code: Holo-[acyl-carrier-protein] synthase (126 aa).

Mg(2+) contacts are provided by aspartate 9 and glutamate 58.

It belongs to the P-Pant transferase superfamily. AcpS family. The cofactor is Mg(2+).

It is found in the cytoplasm. The catalysed reaction is apo-[ACP] + CoA = holo-[ACP] + adenosine 3',5'-bisphosphate + H(+). Functionally, transfers the 4'-phosphopantetheine moiety from coenzyme A to a Ser of acyl-carrier-protein. In Enterobacter sp. (strain 638), this protein is Holo-[acyl-carrier-protein] synthase.